Here is a 210-residue protein sequence, read N- to C-terminus: Protein GrpE (210 aa).

Residues 1-42 (MANEERTIPETNVASERPEDPVESQTRAEGGEQIQEAAPETA) are disordered.

The protein belongs to the GrpE family. In terms of assembly, homodimer.

It is found in the cytoplasm. Its function is as follows. Participates actively in the response to hyperosmotic and heat shock by preventing the aggregation of stress-denatured proteins, in association with DnaK and GrpE. It is the nucleotide exchange factor for DnaK and may function as a thermosensor. Unfolded proteins bind initially to DnaJ; upon interaction with the DnaJ-bound protein, DnaK hydrolyzes its bound ATP, resulting in the formation of a stable complex. GrpE releases ADP from DnaK; ATP binding to DnaK triggers the release of the substrate protein, thus completing the reaction cycle. Several rounds of ATP-dependent interactions between DnaJ, DnaK and GrpE are required for fully efficient folding. This chain is Protein GrpE, found in Nitrosococcus oceani (strain ATCC 19707 / BCRC 17464 / JCM 30415 / NCIMB 11848 / C-107).